The following is a 349-amino-acid chain: DNA repair protein XRCC3 (349 aa).

N-acetylmethionine is present on Met1. Residue 107–114 coordinates ATP; it reads GCSSAGKT.

It belongs to the RecA family. RAD51 subfamily. As to quaternary structure, interacts with RAD51C and RAD51. Part of the CX3 complex consisting of RAD51C and XRCC3; the complex has a ring-like structure arranged into a flat disc around a central channel; CX3 can interact with RAD51 in vitro. Forms a complex with FANCD2, BRCA2 and phosphorylated FANCG. Interacts with SWSAP1 and ZSWIM7; involved in homologous recombination repair. Interacts directly with PALB2 which may serve as a scaffold for a HR complex containing PALB2, BRCA2, RAD51C, RAD51 and XRCC3.

It localises to the nucleus. It is found in the cytoplasm. Its subcellular location is the perinuclear region. The protein localises to the mitochondrion matrix. In terms of biological role, involved in the homologous recombination repair (HRR) pathway of double-stranded DNA, thought to repair chromosomal fragmentation, translocations and deletions. Part of the RAD21 paralog protein complex CX3 which acts in the BRCA1-BRCA2-dependent HR pathway. Upon DNA damage, CX3 acts downstream of RAD51 recruitment; the complex binds predominantly to the intersection of the four duplex arms of the Holliday junction (HJ) and to junctions of replication forks. Involved in HJ resolution and thus in processing HR intermediates late in the DNA repair process; the function may be linked to the CX3 complex and seems to involve GEN1 during mitotic cell cycle progression. Part of a PALB2-scaffolded HR complex containing BRCA2 and RAD51C and which is thought to play a role in DNA repair by HR. Plays a role in regulating mitochondrial DNA copy number under conditions of oxidative stress in the presence of RAD51 and RAD51C. This is DNA repair protein XRCC3 (Xrcc3) from Mus musculus (Mouse).